Consider the following 285-residue polypeptide: NAC domain-containing protein 92 (285 aa).

The NAC domain occupies 20–170; it reads LPPGFRFHPT…EWVICRVFQK (151 aa). The DNA-binding element occupies 117–176; it reads VGMKKTLVFYKGRAPKGVKTNWVMHEYRLEGKYCIENLPQTAKNEWVICRVFQKRADGTK.

As to quaternary structure, forms homodimers. Interacts with GLK1 and GLK2. Interacts with NLA. Ubiquitinated by NLA. Ubiquitination of NAC92 leads to its degradation by the proteasome during leaf senescence under nitrogen deficiency. As to expression, mostly expressed in roots and flowers, and, to a lower extent, in shoots and leaves. Particularly expressed in old and senescing tissues.

Its subcellular location is the nucleus. In terms of biological role, transcription activator that binds to DNA in promoters of target genes on a specific bipartite motif 5'-[ACG][CA]GT[AG](5-6n)[CT]AC[AG]-3'. Promotes lateral root development. Triggers the expression of senescence-associated genes during age-, salt- and dark-induced senescence through a regulatory network that may involve cross-talk with salt- and H(2)O(2)-dependent signaling pathways. Also regulates genes during seed germination. Positively regulates aging-induced cell death. Involved in age-related resistance (ARR) against Pseudomonas syringae pv. tomato and Hyaloperonospora arabidopsidis. Antagonizes GLK1 and GLK2 transcriptional activity, shifting the balance from chloroplast maintenance towards deterioration during leaf senescence. Promotes the expression of senescence-associated genes, including ENDO1/BFN1, SWEET15/SAG29 and SINA1/At3g13672, during senescence onset. The polypeptide is NAC domain-containing protein 92 (Arabidopsis thaliana (Mouse-ear cress)).